The primary structure comprises 136 residues: HTH-type transcriptional regulator LrpA (136 aa).

One can recognise an HTH asnC-type domain in the interval 2 to 63 (IDEIDKKILD…EVNQVKLGFS (62 aa)). The H-T-H motif DNA-binding region spans 21 to 40 (MKKLGEKVHLTAPATASRVV).

Functionally, negative regulation of glyA transcription and kinB-dependent sporulation. The protein is HTH-type transcriptional regulator LrpA (lrpA) of Bacillus subtilis (strain 168).